We begin with the raw amino-acid sequence, 469 residues long: Protein CrtJ (469 aa).

A PAS domain is found at 153–225 (IETRYRVLLE…NLAKIAGSDP (73 aa)).

It participates in carotenoid biosynthesis; spheroidene biosynthesis. This is Protein CrtJ (crtJ) from Rhodobacter capsulatus (Rhodopseudomonas capsulata).